The following is a 337-amino-acid chain: Cytoskeleton protein RodZ (337 aa).

Topologically, residues 1 to 111 are cytoplasmic; that stretch reads MNTEATHDQN…LGKRRKKRDG (111 aa). Residues 19–71 form the HTH cro/C1-type domain; sequence LRNAREQLGLSQQAVAERLCLKVSTVRDIEEDKAPADLASTFLRGYIRSYARL. A DNA-binding region (H-T-H motif) is located at residues 30-49; the sequence is QQAVAERLCLKVSTVRDIEE. A helical; Signal-anchor for type II membrane protein membrane pass occupies residues 112 to 132; the sequence is WLMTFTWLVLFVVIGLSGAWW. The Periplasmic portion of the chain corresponds to 133–337; it reads WQDHKAQQEE…TLNAEQSPAQ (205 aa). The segment covering 145 to 167 has biased composition (polar residues); that stretch reads TMADQSSAELSSNSEQGQSVPLN. Positions 145-220 are disordered; that stretch reads TMADQSSAEL…VSPSQANVDT (76 aa). Low complexity predominate over residues 168-207; sequence TSTTTDPATTSTPPASVDTTATNTQTPAVTAPAPAVDPQQ. Positions 208–218 are enriched in polar residues; it reads NAVVSPSQANV.

It belongs to the RodZ family.

It localises to the cell inner membrane. In terms of biological role, cytoskeletal protein that is involved in cell-shape control through regulation of the length of the long axis. The protein is Cytoskeleton protein RodZ of Escherichia coli O17:K52:H18 (strain UMN026 / ExPEC).